Reading from the N-terminus, the 89-residue chain is Small ribosomal subunit protein uS15 (89 aa).

This sequence belongs to the universal ribosomal protein uS15 family. In terms of assembly, part of the 30S ribosomal subunit. Forms a bridge to the 50S subunit in the 70S ribosome, contacting the 23S rRNA.

One of the primary rRNA binding proteins, it binds directly to 16S rRNA where it helps nucleate assembly of the platform of the 30S subunit by binding and bridging several RNA helices of the 16S rRNA. In terms of biological role, forms an intersubunit bridge (bridge B4) with the 23S rRNA of the 50S subunit in the ribosome. This chain is Small ribosomal subunit protein uS15, found in Anaeromyxobacter sp. (strain Fw109-5).